A 408-amino-acid chain; its full sequence is Glutaryl-CoA dehydrogenase, mitochondrial (408 aa).

Residues 1-13 (KGGKTQGRSAKSS) constitute a mitochondrion transit peptide. Substrate is bound by residues 107 to 108 (RS) and Ser-156. FAD is bound by residues 147 to 156 (FGLTEPNHGS), Ser-156, and 182 to 184 (WIT). Lys-210 bears the N6-acetyllysine mark. 257-264 (FGCLNNAR) provides a ligand contact to substrate. Residues Arg-289, Gln-300, and 357–361 (DMLGG) contribute to the FAD site. Glu-384 (proton acceptor) is an active-site residue. Gly-385 provides a ligand contact to substrate. Residues Thr-386, 386-388 (THD), and Phe-404 contribute to the FAD site.

This sequence belongs to the acyl-CoA dehydrogenase family. Homotetramer. FAD serves as cofactor.

It is found in the mitochondrion matrix. The enzyme catalyses glutaryl-CoA + oxidized [electron-transfer flavoprotein] + 2 H(+) = (2E)-butenoyl-CoA + reduced [electron-transfer flavoprotein] + CO2. The protein operates within amino-acid metabolism; lysine degradation. Its pathway is amino-acid metabolism; tryptophan metabolism. Its function is as follows. Catalyzes the oxidative decarboxylation of glutaryl-CoA to crotonyl-CoA and CO(2) in the degradative pathway of L-lysine, L-hydroxylysine, and L-tryptophan metabolism. It uses electron transfer flavoprotein as its electron acceptor. This is Glutaryl-CoA dehydrogenase, mitochondrial (GCDH) from Sus scrofa (Pig).